Reading from the N-terminus, the 244-residue chain is Nuclear protein UL4 homolog (244 aa).

Residues 193-227 (RPDDQTTPTPTPHQYTSQRRQPETNCPSSPQPAFF) form a disordered region. Polar residues predominate over residues 205–220 (HQYTSQRRQPETNCPS).

Belongs to the alphaherpesvirinae HHV-1 UL4 family.

The protein localises to the host nucleus. The protein is Nuclear protein UL4 homolog of Varicella-zoster virus (strain Dumas) (HHV-3).